A 705-amino-acid chain; its full sequence is Elongation factor G (705 aa).

The 283-residue stretch at 8 to 290 (HRYRNIGIMA…GVIHLLPSPA (283 aa)) folds into the tr-type G domain. GTP is bound by residues 17–24 (AHIDAGKT), 88–92 (DTPGH), and 142–145 (NKMD).

The protein belongs to the TRAFAC class translation factor GTPase superfamily. Classic translation factor GTPase family. EF-G/EF-2 subfamily.

The protein localises to the cytoplasm. Its function is as follows. Catalyzes the GTP-dependent ribosomal translocation step during translation elongation. During this step, the ribosome changes from the pre-translocational (PRE) to the post-translocational (POST) state as the newly formed A-site-bound peptidyl-tRNA and P-site-bound deacylated tRNA move to the P and E sites, respectively. Catalyzes the coordinated movement of the two tRNA molecules, the mRNA and conformational changes in the ribosome. In Xylella fastidiosa (strain M12), this protein is Elongation factor G.